Here is a 190-residue protein sequence, read N- to C-terminus: Thymidylate kinase (190 aa).

7–14 (GVDTCGKS) lines the ATP pocket.

Belongs to the thymidylate kinase family.

The enzyme catalyses dTMP + ATP = dTDP + ADP. Functionally, phosphorylation of dTMP to form dTDP in both de novo and salvage pathways of dTTP synthesis. This Wolinella succinogenes (strain ATCC 29543 / DSM 1740 / CCUG 13145 / JCM 31913 / LMG 7466 / NCTC 11488 / FDC 602W) (Vibrio succinogenes) protein is Thymidylate kinase.